A 260-amino-acid chain; its full sequence is Triosephosphate isomerase (260 aa).

10–12 (NWK) contributes to the substrate binding site. H100 functions as the Electrophile in the catalytic mechanism. E172 functions as the Proton acceptor in the catalytic mechanism. Substrate-binding positions include G178, S218, and 239–240 (GG).

This sequence belongs to the triosephosphate isomerase family. As to quaternary structure, homodimer.

The protein localises to the cytoplasm. The catalysed reaction is D-glyceraldehyde 3-phosphate = dihydroxyacetone phosphate. It functions in the pathway carbohydrate biosynthesis; gluconeogenesis. It participates in carbohydrate degradation; glycolysis; D-glyceraldehyde 3-phosphate from glycerone phosphate: step 1/1. Involved in the gluconeogenesis. Catalyzes stereospecifically the conversion of dihydroxyacetone phosphate (DHAP) to D-glyceraldehyde-3-phosphate (G3P). This is Triosephosphate isomerase from Corynebacterium diphtheriae (strain ATCC 700971 / NCTC 13129 / Biotype gravis).